Here is a 125-residue protein sequence, read N- to C-terminus: Diol dehydratase-reactivating factor small subunit (125 aa).

Glutamate 31 contributes to the Mg(2+) binding site.

It belongs to the DdrB/PduH family. In terms of assembly, component of the DDR complex, a heterotetramer of DdrA(2)/DdrB(2). The DDR complex interacts with the diol dehydratase complex in the presence of ADP but not ATP. Requires Mg(2+) as cofactor.

It catalyses the reaction ATP + H2O = ADP + phosphate + H(+). Small subunit of the diol dehydratase-reactivating factor (DDR), which reactivates suicidally inhibited adenosylcobalamin-dependent diol dehydratase (DD, pddA, pddB, pddC). DDR acts as a chaperone, reactivates inactivated DD holoenzyme in the presence of ATP, Mg(2+) and free adenosylcobalamin (AdoCbl), by mediating the exchange of the tightly bound damaged cofactor AdoCbl for a free intact one. Reactivation takes place in two steps: ADP-dependent cobalamin release, and ATP-dependent dissociation of the DD apoenzyme-DDR complex. DDR has weak ATPase activity which is required for DD reactivation. Activates glycerol-inactivated, O2-inactivated holoenzyme and inactivated enzyme-cyanocobalamin complex. Also reactivates glycerol-inactivated hologlycerol dehydratase, a DD isozyme. The sequence is that of Diol dehydratase-reactivating factor small subunit from Klebsiella michiganensis (strain ATCC 8724 / DSM 4798 / JCM 20051 / NBRC 3318 / NRRL B-199 / KCTC 1686 / BUCSAV 143 / CCM 1901).